The chain runs to 134 residues: Interleukin-5 (134 aa).

Positions 1 to 21 (MRMLLNLSLLALGAAYVSAFA) are cleaved as a signal peptide. N-linked (GlcNAc...) asparagine glycans are attached at residues Asn76 and Asn90.

Belongs to the IL-5 family. As to quaternary structure, homodimer; disulfide-linked. Interacts with IL5RA. Interacts with CSF2RB.

It localises to the secreted. Functionally, homodimeric cytokine expressed predominantly by T-lymphocytes and NK cells that plays an important role in the survival, differentiation, and chemotaxis of eosinophils. Also acts on activated and resting B-cells to induce immunoglobulin production, growth, and differentiation. Mechanistically, exerts its biological effects through a receptor composed of IL5RA subunit and the cytokine receptor common subunit beta/CSF2RB. Binding to the receptor leads to activation of various kinases including LYN, SYK and JAK2 and thereby propagates signals through the RAS-MAPK and JAK-STAT5 pathways respectively. The protein is Interleukin-5 (IL5) of Canis lupus familiaris (Dog).